A 333-amino-acid polypeptide reads, in one-letter code: MRNGRCLVTPFVTAQRLANLRNTLWNRQQIAFSTTTASSSTSPIQESSSPLSIRFEYGLPLLDVPLPSRNEPCQFTMRPLSDTIGSLCEFLRQEDRGIDYVAVYGTNGVKLATCTSIEHLLQFGSFRLRLNDKFFDVTVPKTGTMPYDSDKLRQLDDLRATVASLHAALCVDEYKLSREKKLLLQLENAETLLAPLHDAKRKIEQECEAHTDRVMWAGFAAMGVQTGLFARLTWWEYSWDIMEPVTYFATYSTVCATFGYYLYTQQSFEYPSARERVYTKQFYRRAQKQNFDIEKYNRLVTEVDELRNQLKRMRDPLFQHLPVSYLSNLEAEK.

The N-terminal 22 residues, 1 to 22 (MRNGRCLVTPFVTAQRLANLRN), are a transit peptide targeting the mitochondrion. At 23–214 (TLWNRQQIAF…QECEAHTDRV (192 aa)) the chain is on the mitochondrial matrix side. Residues 180-193 (KKLLLQLENAETLL) adopt a coiled-coil conformation. The segment at 195–213 (PLHDAKRKIEQECEAHTDR) is outer juxtamembrane helix (OJMH). Residues 215 to 234 (MWAGFAAMGVQTGLFARLTW) traverse the membrane as a helical segment. Residues 235–243 (WEYSWDIME) are Mitochondrial intermembrane-facing. The Selectivity filter signature appears at 239–247 (WDIMEPVTY). E243 is a Ca(2+) binding site. The chain crosses the membrane as a helical span at residues 244–260 (PVTYFATYSTVCATFGY). Over 261-333 (YLYTQQSFEY…SYLSNLEAEK (73 aa)) the chain is Mitochondrial matrix. Residues 262 to 271 (LYTQQSFEYP) are inner juxtamembrane helix (IJMH). A coiled-coil region spans residues 289–316 (QNFDIEKYNRLVTEVDELRNQLKRMRDP).

This sequence belongs to the MCU (TC 1.A.77) family.

The protein resides in the mitochondrion inner membrane. The catalysed reaction is Ca(2+)(in) = Ca(2+)(out). Its activity is regulated as follows. Inhibited by ruthenium red or its derivative Ru360; possibly by obstructing the pore. Mitochondrial inner membrane calcium uniporter that mediates calcium uptake into mitochondria. Constitutes a pore-forming and calcium-conducting subunit. Mitochondrial calcium homeostasis plays key roles in cellular physiology and regulates cell bioenergetics, cytoplasmic calcium signals and activation of cell death pathways. Required for rapid mitochondrial calcium uptake and mitochondrial reactive oxygen species (mtROS) production after wounding. In addition, together with mitochondrial calcium regulator micu-1, required for mitochondrial calcium uptake following axon injury in PLM touch receptor neurons. This Caenorhabditis elegans protein is Calcium uniporter protein, mitochondrial.